A 327-amino-acid chain; its full sequence is MAKASLDTLPRSVPQKRTAGDLAKDLFVLSRFNRYNPLLATFSGVWATLLAGASKRIDHPGSISTEYVFKQALLVFVGGYIFCGAGMVWNDWIDLNIDKQVARTKERPLAAGRITNTEALIWMMAQYIASWYLIAYTLDGHNVLEAMIPVTISTILYPFGKRSFFKTIYFYPQYFLGFTLGYPSVIGWLAIKGQDQSLQDNIMESFALGTTVFTWVLYLNTAYSYQDIEGDKKANVNSVYFLAGSYIHYFLVFLAALVLGATSLQLKAQASQWLWGSWLSVWGYSFASQLSRFSAKDPSSGGTLHKENFALGVWTVFACAVELLLKS.

The next 8 membrane-spanning stretches (helical) occupy residues 35-54 (YNPL…AGAS), 73-93 (LLVF…NDWI), 118-138 (EALI…AYTL), 140-160 (GHNV…YPFG), 171-191 (YPQY…WLAI), 202-222 (IMES…LNTA), 239-259 (VYFL…ALVL), and 307-327 (ENFA…LLKS).

It belongs to the UbiA prenyltransferase family. Mg(2+) serves as cofactor.

It is found in the membrane. The protein operates within secondary metabolite biosynthesis; terpenoid biosynthesis. In terms of biological role, olyprenyl transferase; part of the cluster that mediates the biosynthesis of shearones, diterpenoid pyrones (DPs) which are structurally diverse meroterpenoids consisting of a diterpene linked by a pyrone, and which may exhibit a range of bioactivities. Within the pathway, esdpC takes part to the biosynthesis of the molecular scaffold by catalyzing the C-3 geranylgeranylation reaction of the alpha-pyrone produced by esdpA. The molecular scaffold is commonly biosynthesized by a series of enzymes including the non-reducing polyketide synthase (NR-PKS) esdpA that generates an alpha-pyrone; the prenyltransferase esdpC that attaches a geranylgeranyl pyrophosphate (GGPP) produced by the GGPP synthase (GGPPS) esdpD onto the pyrone unit; the FAD-dependent monooxygenase esdpE that converts an olefin on the diterpene unit into an epoxide; and the terpene cyclase esdpB that catalyzes the cyclization reactions to give the molecular backbone shearone A. In the modification steps, esdpF oxidizes the hydroxy group to a ketone at C-3 and esdpG then attaches hydroxy groups at both C-11 and C-12. After that, esdpI hydroxylates at C-20 and esdpH hydroxylates at C-6'. The ether bridge is generated by nucleophilic attack of the hydroxy group at C-20 to the carbonyl carbon at C-3. EsdpH can also functions prior to esdpI. The different combinations of these modification enzymes lead to the production of diverse shearone derivatives, shearone I being the end product of the pathway. The alpha-ketoglutarate-dependent dioxygenase esdpJ seems not to be involved in this pathway. The chain is Polyprenyl transferase esdpC from Penicillium shearii (Eupenicillium shearii).